The primary structure comprises 194 residues: MDEDGLPLMGSGIDLTKVPAIQQKRTVAFLNQFVVHTVQFLNRFSAVCEEKLADLSLRIQQIETTLNILDAKLSSIPGLEDVTVEVSPLNVTAVTNGSHSETTSEQTQQNSTQDSGAQESEAPSENVLTVAKDPRYARYLKMVQVGVPVMAIRDKMISEGLDPELLEKPDAPVPNGESERAVEESSDSDSSFSD.

Position 1 is an N-acetylmethionine (Met-1). Residues 46–74 (AVCEEKLADLSLRIQQIETTLNILDAKLS) are a coiled coil. Disordered regions lie at residues 94 to 126 (VTNG…PSEN) and 158 to 194 (SEGL…SFSD). The span at 98–113 (SHSETTSEQTQQNSTQ) shows a compositional bias: low complexity. Residues 114–126 (DSGAQESEAPSEN) show a composition bias toward polar residues.

This sequence belongs to the CCDC53 family. As to quaternary structure, component of the WASH core complex also described as WASH regulatory complex (SHRC) composed of WASHC1, WASHC2, WASHC3, WASHC4 and WASHC5. The WASH core complex associates via WASHC2 with the F-actin-capping protein dimer (formed by CAPZA1, CAPZA2 or CAPZA3 and CAPZB) in a transient or substoichiometric manner which was initially described as WASH complex.

Its subcellular location is the early endosome. In terms of biological role, acts as a component of the WASH core complex that functions as a nucleation-promoting factor (NPF) at the surface of endosomes, where it recruits and activates the Arp2/3 complex to induce actin polymerization, playing a key role in the fission of tubules that serve as transport intermediates during endosome sortingg. This Mus musculus (Mouse) protein is WASH complex subunit 3.